The primary structure comprises 329 residues: Ribosomal RNA small subunit methyltransferase H (329 aa).

Residues 44 to 46 (GGY), Asp-62, Asp-110, and Gln-117 contribute to the S-adenosyl-L-methionine site. The tract at residues 297–329 (APAELAANPRARSARLRSAERTSAPARRLGDAA) is disordered.

Belongs to the methyltransferase superfamily. RsmH family.

It is found in the cytoplasm. The catalysed reaction is cytidine(1402) in 16S rRNA + S-adenosyl-L-methionine = N(4)-methylcytidine(1402) in 16S rRNA + S-adenosyl-L-homocysteine + H(+). Its function is as follows. Specifically methylates the N4 position of cytidine in position 1402 (C1402) of 16S rRNA. This Rhodospirillum centenum (strain ATCC 51521 / SW) protein is Ribosomal RNA small subunit methyltransferase H.